Reading from the N-terminus, the 260-residue chain is Thiazole synthase (260 aa).

Lysine 96 (schiff-base intermediate with DXP) is an active-site residue. Residues glycine 157, 183 to 184, and 205 to 206 each bind 1-deoxy-D-xylulose 5-phosphate; these read AG and AS.

The protein belongs to the ThiG family. As to quaternary structure, homotetramer. Forms heterodimers with either ThiH or ThiS.

It is found in the cytoplasm. It catalyses the reaction [ThiS sulfur-carrier protein]-C-terminal-Gly-aminoethanethioate + 2-iminoacetate + 1-deoxy-D-xylulose 5-phosphate = [ThiS sulfur-carrier protein]-C-terminal Gly-Gly + 2-[(2R,5Z)-2-carboxy-4-methylthiazol-5(2H)-ylidene]ethyl phosphate + 2 H2O + H(+). It participates in cofactor biosynthesis; thiamine diphosphate biosynthesis. Its function is as follows. Catalyzes the rearrangement of 1-deoxy-D-xylulose 5-phosphate (DXP) to produce the thiazole phosphate moiety of thiamine. Sulfur is provided by the thiocarboxylate moiety of the carrier protein ThiS. In vitro, sulfur can be provided by H(2)S. The protein is Thiazole synthase of Corynebacterium glutamicum (strain R).